Consider the following 216-residue polypeptide: Large ribosomal subunit protein bL25 (216 aa).

Disordered regions lie at residues 1 to 21 (MAET…GAVR) and 192 to 216 (SADN…GKED). Residues 195 to 216 (NEAKTEEAGEDKSEEKSSGKED) show a composition bias toward basic and acidic residues.

This sequence belongs to the bacterial ribosomal protein bL25 family. CTC subfamily. In terms of assembly, part of the 50S ribosomal subunit; part of the 5S rRNA/L5/L18/L25 subcomplex. Contacts the 5S rRNA. Binds to the 5S rRNA independently of L5 and L18.

In terms of biological role, this is one of the proteins that binds to the 5S RNA in the ribosome where it forms part of the central protuberance. In Parvibaculum lavamentivorans (strain DS-1 / DSM 13023 / NCIMB 13966), this protein is Large ribosomal subunit protein bL25.